Here is a 289-residue protein sequence, read N- to C-terminus: Diaminopimelate epimerase (289 aa).

Residues Asn-11 and Asn-78 each coordinate substrate. The Proton donor role is filled by Cys-87. Residues 88-89 (GN), Asn-163, Asn-199, and 217-218 (ER) contribute to the substrate site. Cys-226 serves as the catalytic Proton acceptor. 227–228 (GT) contacts substrate.

Belongs to the diaminopimelate epimerase family. Homodimer.

Its subcellular location is the cytoplasm. The enzyme catalyses (2S,6S)-2,6-diaminopimelate = meso-2,6-diaminopimelate. It functions in the pathway amino-acid biosynthesis; L-lysine biosynthesis via DAP pathway; DL-2,6-diaminopimelate from LL-2,6-diaminopimelate: step 1/1. Catalyzes the stereoinversion of LL-2,6-diaminopimelate (L,L-DAP) to meso-diaminopimelate (meso-DAP), a precursor of L-lysine and an essential component of the bacterial peptidoglycan. In Mycolicibacterium gilvum (strain PYR-GCK) (Mycobacterium gilvum (strain PYR-GCK)), this protein is Diaminopimelate epimerase.